A 309-amino-acid polypeptide reads, in one-letter code: Aromatic prenyltransferase (309 aa).

Belongs to the aromatic prenyltransferase family.

Prenyltransferase that attaches isoprenoid moieties to carbon atoms of aromatic substrates in an enzyme-catalyzed Friedel-Crafts reaction. Shows specificity for dimethylallyl diphosphate (DMAPP) and does not accept geranyl diphosphate (GPP) or isopentenyl diphosphate (IPP). Prenylates the artificial substrate 2,7-dihydroxynaphthalene (2,7-DHN), as well as dihydrophenazine-1-carboxylic acid and 4-hydroxybenzoic acid at lower levels. Only traces of products are detected with aspulvinone E or flaviolin as substrates; and no product is formed with L-tryptophan, L-tyrosine, or 4-hydroxyphenylpyruvate. Ptf seems no to be involved in the prenylation reaction in the biosynthesis of aspulvinone H and J and the physiological function of ptf remains unknown. This chain is Aromatic prenyltransferase, found in Sclerotinia sclerotiorum (strain ATCC 18683 / 1980 / Ss-1) (White mold).